The following is a 142-amino-acid chain: Putative transcriptional regulatory protein PF0535 (142 aa).

The protein belongs to the Tfx family.

Putative transcriptional regulator. The polypeptide is Putative transcriptional regulatory protein PF0535 (Pyrococcus furiosus (strain ATCC 43587 / DSM 3638 / JCM 8422 / Vc1)).